Reading from the N-terminus, the 89-residue chain is Small ribosomal subunit protein uS14 (89 aa).

The protein belongs to the universal ribosomal protein uS14 family. In terms of assembly, part of the 30S ribosomal subunit. Contacts proteins S3 and S10.

Functionally, binds 16S rRNA, required for the assembly of 30S particles and may also be responsible for determining the conformation of the 16S rRNA at the A site. The sequence is that of Small ribosomal subunit protein uS14 from Exiguobacterium sibiricum (strain DSM 17290 / CCUG 55495 / CIP 109462 / JCM 13490 / 255-15).